The primary structure comprises 304 residues: Phosphatidylserine decarboxylase proenzyme (304 aa).

Catalysis depends on charge relay system; for autoendoproteolytic cleavage activity residues Asp90, His147, and Ser253. Catalysis depends on Ser253, which acts as the Schiff-base intermediate with substrate; via pyruvic acid; for decarboxylase activity. Ser253 carries the pyruvic acid (Ser); by autocatalysis modification.

The protein belongs to the phosphatidylserine decarboxylase family. PSD-B subfamily. Prokaryotic type I sub-subfamily. Heterodimer of a large membrane-associated beta subunit and a small pyruvoyl-containing alpha subunit. Requires pyruvate as cofactor. Post-translationally, is synthesized initially as an inactive proenzyme. Formation of the active enzyme involves a self-maturation process in which the active site pyruvoyl group is generated from an internal serine residue via an autocatalytic post-translational modification. Two non-identical subunits are generated from the proenzyme in this reaction, and the pyruvate is formed at the N-terminus of the alpha chain, which is derived from the carboxyl end of the proenzyme. The autoendoproteolytic cleavage occurs by a canonical serine protease mechanism, in which the side chain hydroxyl group of the serine supplies its oxygen atom to form the C-terminus of the beta chain, while the remainder of the serine residue undergoes an oxidative deamination to produce ammonia and the pyruvoyl prosthetic group on the alpha chain. During this reaction, the Ser that is part of the protease active site of the proenzyme becomes the pyruvoyl prosthetic group, which constitutes an essential element of the active site of the mature decarboxylase.

It is found in the cell membrane. It carries out the reaction a 1,2-diacyl-sn-glycero-3-phospho-L-serine + H(+) = a 1,2-diacyl-sn-glycero-3-phosphoethanolamine + CO2. The protein operates within phospholipid metabolism; phosphatidylethanolamine biosynthesis; phosphatidylethanolamine from CDP-diacylglycerol: step 2/2. Functionally, catalyzes the formation of phosphatidylethanolamine (PtdEtn) from phosphatidylserine (PtdSer). The protein is Phosphatidylserine decarboxylase proenzyme of Dickeya dadantii (strain 3937) (Erwinia chrysanthemi (strain 3937)).